The chain runs to 603 residues: MKVASVIGLRPRISGLLFLTLGVIALITILVPNSDSSSTTSTTRVPPSNIYSNYGRVKEQAAVDYLDLRFFSLGVNRLKEFPLCGKERDNYVPCYNVTESDRNCEFAREEERCLVRPPRDYKIPLRWPVGRDIIWTGNVKITKDQFLSSGTMTKRLMLLEENQITFHSDDGLIFDGVKDYAFQIAEMIGLGSDTEFPQAGIRTVLDIGCGFGSFGAHLVSLNVMPICIAEYETSGSQVQLALERGLPAMIGNFFSKQLPYPALSFDMVHCAQCGITWDIKDAMLLLEVDRVLKPGGYFVLTSPTSKAQGNSPDTKKTSISTRVDELSKKICWSLSGQQDETFLWQKTADPNCYSSRSQASIPVCKDDDSVPYYHPLVPCISGTKSKRWIPIQNRSRASGTSLSELEIHGIKPEEFDEDIQVWRSALKNYWSLLTPLIFSDHPKRPGDEDPVPPFYMIRNAMDMNARYGNLNQALLNQGKSVWVMNVVPVKARNTLPIILDRGFTGALHDWCEPFPTYPRTYDMLHANELLTHLSSERCSLMDLFLEMDRILRPEGWVVLSDKLGVIEMARTLAARVRWEARVIDIQDGSDQRLLVCQKPLLKK.

Residues 1 to 12 (MKVASVIGLRPR) are Cytoplasmic-facing. A helical; Signal-anchor for type II membrane protein membrane pass occupies residues 13 to 33 (ISGLLFLTLGVIALITILVPN). Over 34-603 (SDSSSTTSTT…LVCQKPLLKK (570 aa)) the chain is Lumenal. N-linked (GlcNAc...) asparagine glycans are attached at residues asparagine 96 and asparagine 393.

It belongs to the methyltransferase superfamily.

Its subcellular location is the endoplasmic reticulum membrane. This is Probable methyltransferase PMT4 from Arabidopsis thaliana (Mouse-ear cress).